A 412-amino-acid polypeptide reads, in one-letter code: Histidinol dehydrogenase (412 aa).

NAD(+) contacts are provided by Tyr118, Gln176, and Asn199. 3 residues coordinate substrate: Thr222, Gln244, and His247. Residues Gln244 and His247 each coordinate Zn(2+). Active-site proton acceptor residues include Glu311 and His312. Positions 312, 345, 399, and 404 each coordinate substrate. Asp345 serves as a coordination point for Zn(2+). Residue His404 coordinates Zn(2+).

Belongs to the histidinol dehydrogenase family. Zn(2+) is required as a cofactor.

The enzyme catalyses L-histidinol + 2 NAD(+) + H2O = L-histidine + 2 NADH + 3 H(+). Its pathway is amino-acid biosynthesis; L-histidine biosynthesis; L-histidine from 5-phospho-alpha-D-ribose 1-diphosphate: step 9/9. In terms of biological role, catalyzes the sequential NAD-dependent oxidations of L-histidinol to L-histidinaldehyde and then to L-histidine. The protein is Histidinol dehydrogenase of Thermus thermophilus (strain ATCC BAA-163 / DSM 7039 / HB27).